A 283-amino-acid polypeptide reads, in one-letter code: Glutamate racemase (283 aa).

Residues 28 to 29 (DS) and 60 to 61 (YG) each bind substrate. Cys-92 acts as the Proton donor/acceptor in catalysis. 93 to 94 (NT) is a substrate binding site. The Proton donor/acceptor role is filled by Cys-204. 205-206 (TH) lines the substrate pocket.

The protein belongs to the aspartate/glutamate racemases family.

The catalysed reaction is L-glutamate = D-glutamate. Its pathway is cell wall biogenesis; peptidoglycan biosynthesis. Functionally, provides the (R)-glutamate required for cell wall biosynthesis. This chain is Glutamate racemase, found in Salmonella choleraesuis (strain SC-B67).